Consider the following 322-residue polypeptide: Undecaprenyl-phosphate 4-deoxy-4-formamido-L-arabinose transferase (322 aa).

At 1 to 235 (MFEIHPVKKV…TCLTTTPLRM (235 aa)) the chain is on the cytoplasmic side. The chain crosses the membrane as a helical span at residues 236-256 (LSLLGSIIAIGGFSIAVLLVI). Residues 257–269 (LRLTFGPQWAAEG) are Periplasmic-facing. Residues 270–290 (VFMLFAVLFTFIGAQFIGMGL) form a helical membrane-spanning segment. The Cytoplasmic segment spans residues 291–322 (LGEYIGRIYTDVRARPRYFVQQVIRPSSKENE).

This sequence belongs to the glycosyltransferase 2 family.

It localises to the cell inner membrane. It carries out the reaction UDP-4-deoxy-4-formamido-beta-L-arabinose + di-trans,octa-cis-undecaprenyl phosphate = 4-deoxy-4-formamido-alpha-L-arabinopyranosyl di-trans,octa-cis-undecaprenyl phosphate + UDP. It participates in glycolipid biosynthesis; 4-amino-4-deoxy-alpha-L-arabinose undecaprenyl phosphate biosynthesis; 4-amino-4-deoxy-alpha-L-arabinose undecaprenyl phosphate from UDP-4-deoxy-4-formamido-beta-L-arabinose and undecaprenyl phosphate: step 1/2. It functions in the pathway bacterial outer membrane biogenesis; lipopolysaccharide biosynthesis. Catalyzes the transfer of 4-deoxy-4-formamido-L-arabinose from UDP to undecaprenyl phosphate. The modified arabinose is attached to lipid A and is required for resistance to polymyxin and cationic antimicrobial peptides. The sequence is that of Undecaprenyl-phosphate 4-deoxy-4-formamido-L-arabinose transferase from Escherichia coli O17:K52:H18 (strain UMN026 / ExPEC).